The primary structure comprises 345 residues: Probable translocation protein y4yO (345 aa).

The segment covering 1-22 (MSDTSEEKSHGATPKKLSDARK) has biased composition (basic and acidic residues). The disordered stretch occupies residues 1-25 (MSDTSEEKSHGATPKKLSDARKRGQ). Transmembrane regions (helical) follow at residues 87–107 (LATVGPLLSALFGAVILAALL), 151–171 (VLVLGGTFSLFFLGLWKTMVY), and 189–209 (QLIGIGAGALLIGGLIDLLLQ).

This sequence belongs to the type III secretion exporter family.

The protein localises to the cell membrane. Functionally, could be involved in the secretion of an unknown factor. The sequence is that of Probable translocation protein y4yO from Sinorhizobium fredii (strain NBRC 101917 / NGR234).